The primary structure comprises 451 residues: Exodeoxyribonuclease 7 large subunit (451 aa).

Belongs to the XseA family. As to quaternary structure, heterooligomer composed of large and small subunits.

It is found in the cytoplasm. It carries out the reaction Exonucleolytic cleavage in either 5'- to 3'- or 3'- to 5'-direction to yield nucleoside 5'-phosphates.. Bidirectionally degrades single-stranded DNA into large acid-insoluble oligonucleotides, which are then degraded further into small acid-soluble oligonucleotides. The polypeptide is Exodeoxyribonuclease 7 large subunit (Neisseria meningitidis serogroup C / serotype 2a (strain ATCC 700532 / DSM 15464 / FAM18)).